The following is a 397-amino-acid chain: Acetate kinase (397 aa).

A Mg(2+)-binding site is contributed by Asn8. Lys15 contacts ATP. Arg89 is a binding site for substrate. Catalysis depends on Asp146, which acts as the Proton donor/acceptor. ATP-binding positions include 206-210, 283-285, and 331-335; these read HVGNG, DMR, and GMGEN. Glu383 is a Mg(2+) binding site.

Belongs to the acetokinase family. Homodimer. Mg(2+) is required as a cofactor. It depends on Mn(2+) as a cofactor.

The protein localises to the cytoplasm. It carries out the reaction acetate + ATP = acetyl phosphate + ADP. It functions in the pathway metabolic intermediate biosynthesis; acetyl-CoA biosynthesis; acetyl-CoA from acetate: step 1/2. Its function is as follows. Catalyzes the formation of acetyl phosphate from acetate and ATP. Can also catalyze the reverse reaction. The chain is Acetate kinase from Streptococcus agalactiae serotype III (strain NEM316).